Here is a 383-residue protein sequence, read N- to C-terminus: uncharacterized protein (383 aa).

2 disordered regions span residues 27–66 (ENNNTNNNTNSNTNSNNKNNNNNNNNKSNNKKQNNNNKKP) and 242–281 (LITTKDSNEQTSSSSSSSTAITTNTNCSNSKSSSQPITRR). 2 stretches are compositionally biased toward low complexity: residues 28-63 (NNNTNNNTNSNTNSNNKNNNNNNNNKSNNKKQNNNN) and 242-275 (LITTKDSNEQTSSSSSSSTAITTNTNCSNSKSSS).

This is an uncharacterized protein from Dictyostelium discoideum (Social amoeba).